Consider the following 279-residue polypeptide: Diaminopimelate epimerase (279 aa).

Substrate contacts are provided by Asn13, Gln46, and Asn66. The active-site Proton donor is the Cys75. Substrate-binding positions include 76 to 77, Asn161, Asn194, and 212 to 213; these read GN and ER. Catalysis depends on Cys221, which acts as the Proton acceptor. 222-223 lines the substrate pocket; that stretch reads GT.

It belongs to the diaminopimelate epimerase family. As to quaternary structure, homodimer.

It is found in the cytoplasm. The enzyme catalyses (2S,6S)-2,6-diaminopimelate = meso-2,6-diaminopimelate. It participates in amino-acid biosynthesis; L-lysine biosynthesis via DAP pathway; DL-2,6-diaminopimelate from LL-2,6-diaminopimelate: step 1/1. Catalyzes the stereoinversion of LL-2,6-diaminopimelate (L,L-DAP) to meso-diaminopimelate (meso-DAP), a precursor of L-lysine and an essential component of the bacterial peptidoglycan. The polypeptide is Diaminopimelate epimerase (Alkalilimnicola ehrlichii (strain ATCC BAA-1101 / DSM 17681 / MLHE-1)).